We begin with the raw amino-acid sequence, 227 residues long: 7-cyano-7-deazaguanine synthase (227 aa).

ATP is bound at residue 8–18 (VSGGADSATVL). Cys192, Cys202, Cys205, and Cys208 together coordinate Zn(2+).

The protein belongs to the QueC family. It depends on Zn(2+) as a cofactor.

The enzyme catalyses 7-carboxy-7-deazaguanine + NH4(+) + ATP = 7-cyano-7-deazaguanine + ADP + phosphate + H2O + H(+). Its pathway is purine metabolism; 7-cyano-7-deazaguanine biosynthesis. Catalyzes the ATP-dependent conversion of 7-carboxy-7-deazaguanine (CDG) to 7-cyano-7-deazaguanine (preQ(0)). This Rickettsia canadensis (strain McKiel) protein is 7-cyano-7-deazaguanine synthase.